The primary structure comprises 530 residues: MEEDSLYLGGEWQFNHFSKLTSSRLDAAFAEIQRTSLPEKSPLSCETRVDLCDDLVPEARQLAPREKLPLSSRRPAAVGAGLQNMGNTCYVNASLQCLTYTPPLANYMLSREHSQTCHRHKGCMLCTMQAHITRALHNPGHVIQPSQALAAGFHRGKQEDAHEFLMFTVDAMKKACLPGHKQVDHPSKDTTLIHQIFGGYWRSQIKCLHCHGISDTFDPYLDIALDIQAAQSVQQALEQLVKPEELNGENAYHCGVCLQRAPASKTLTLHTSAKVLILVLKRFSDVTGNKIAKNVQYPECLDMQPYMSQQNTGPLVYVLYAVLVHAGWSCHNGHYFSYVKAQEGQWYKMDDAEVTAASITSVLSQQAYVLFYIQKSEWERHSESVSRGREPRALGAEDTDRRATQGELKRDHPCLQAPELDEHLVERATQESTLDRWKFLQEQNKTKPEFNVRKVEGTLPPDVLVIHQSKYKCGMKNHHPEQQSSLLNLSSSTPTHQESMNTGTLASLRGRARRSKGKNKHSKRALLVCQ.

Residues 80–375 (AGLQNMGNTC…QAYVLFYIQK (296 aa)) enclose the USP domain. Residue Cys89 is the Nucleophile of the active site. The active-site Proton acceptor is the His334. Basic and acidic residues-rich tracts occupy residues 382-392 (SESVSRGREPR) and 398-412 (DTDR…KRDH). 2 disordered regions span residues 382-412 (SESV…KRDH) and 477-530 (NHHP…LVCQ). The segment covering 493 to 505 (TPTHQESMNTGTL) has biased composition (polar residues). Residues 510–524 (GRARRSKGKNKHSKR) are compositionally biased toward basic residues.

Belongs to the peptidase C19 family. USP17 subfamily.

It is found in the nucleus. The protein localises to the endoplasmic reticulum. The enzyme catalyses Thiol-dependent hydrolysis of ester, thioester, amide, peptide and isopeptide bonds formed by the C-terminal Gly of ubiquitin (a 76-residue protein attached to proteins as an intracellular targeting signal).. In terms of biological role, deubiquitinating enzyme that removes conjugated ubiquitin from specific proteins to regulate different cellular processes that may include cell proliferation, progression through the cell cycle, apoptosis, cell migration, and the cellular response to viral infection. This is Ubiquitin carboxyl-terminal hydrolase 17-like protein 13 (USP17L13) from Homo sapiens (Human).